The sequence spans 280 residues: MQGQVLKKVLKKYVHIGMCTLFLHAILLFPCVAQAVLCQIFLSALIRNTSRMPHTMCSFPSQVTAIFDICACPCAVRSFYLNGNSLIFTGGGHPFSVYASRFSSLPFLETSSGTVAGAAYSVASFLGFTRITSVGTDFSYTNGKPYARGTYLSKQFEQKILRISPLETQFCNLMFRTPTRQDNTQGGITYSNEILDQYKRNFDQITPGARPWHAADFRAFPYKQFINFFHAQLRSKHAAALLAMLPFITWYKTKRTPQAPIFRILELVLEDVLRYTRYNE.

The N-terminal stretch at 1–35 (MQGQVLKKVLKKYVHIGMCTLFLHAILLFPCVAQA) is a signal peptide.

This is an uncharacterized protein from Treponema pallidum (strain Nichols).